Reading from the N-terminus, the 344-residue chain is N-acetyl-gamma-glutamyl-phosphate reductase (344 aa).

C150 is an active-site residue.

It belongs to the NAGSA dehydrogenase family. Type 1 subfamily.

It localises to the cytoplasm. The catalysed reaction is N-acetyl-L-glutamate 5-semialdehyde + phosphate + NADP(+) = N-acetyl-L-glutamyl 5-phosphate + NADPH + H(+). Its pathway is amino-acid biosynthesis; L-arginine biosynthesis; N(2)-acetyl-L-ornithine from L-glutamate: step 3/4. Catalyzes the NADPH-dependent reduction of N-acetyl-5-glutamyl phosphate to yield N-acetyl-L-glutamate 5-semialdehyde. This chain is N-acetyl-gamma-glutamyl-phosphate reductase, found in Pseudomonas aeruginosa (strain ATCC 15692 / DSM 22644 / CIP 104116 / JCM 14847 / LMG 12228 / 1C / PRS 101 / PAO1).